The following is a 1103-amino-acid chain: Isoleucine--tRNA ligase (1103 aa).

Positions 1-25 (MSENVYPKANEGGETAHVAPNPSFP) are disordered. Residues 65–75 (PFANGLPHYGH) carry the 'HIGH' region motif. Positions 649-653 (KMSKH) match the 'KMSKS' region motif. Position 652 (Lys-652) interacts with ATP.

This sequence belongs to the class-I aminoacyl-tRNA synthetase family. IleS type 2 subfamily. In terms of assembly, monomer. It depends on Zn(2+) as a cofactor.

It localises to the cytoplasm. The enzyme catalyses tRNA(Ile) + L-isoleucine + ATP = L-isoleucyl-tRNA(Ile) + AMP + diphosphate. In terms of biological role, catalyzes the attachment of isoleucine to tRNA(Ile). As IleRS can inadvertently accommodate and process structurally similar amino acids such as valine, to avoid such errors it has two additional distinct tRNA(Ile)-dependent editing activities. One activity is designated as 'pretransfer' editing and involves the hydrolysis of activated Val-AMP. The other activity is designated 'posttransfer' editing and involves deacylation of mischarged Val-tRNA(Ile). This is Isoleucine--tRNA ligase from Bifidobacterium longum (strain NCC 2705).